The sequence spans 892 residues: NACHT, LRR and PYD domains-containing protein 6 (892 aa).

Residues 1–103 enclose the Pyrin domain; it reads MDQPEAPCSS…AAQLQERRLQ (103 aa). Residues 158-181 are disordered; it reads APEEAMGPAEEPEPGRARRSDTHT. Over residues 170 to 181 the composition is skewed to basic and acidic residues; that stretch reads EPGRARRSDTHT. Positions 196–513 constitute an NACHT domain; that stretch reads LTVVLQGPAG…EFLAALSYLL (318 aa). ATP is bound at residue 202–209; it reads GPAGIGKT. The disordered stretch occupies residues 352–356; the sequence is KDKKK. Residues 462 to 487 form an LRR 1 repeat; the sequence is EKELEQLELRGSKVQTLFLSKKELPG. Residues 590 to 614 are disordered; it reads APEVTEGAKGLEDTEEPEEEEEGEE. Over residues 602–614 the composition is skewed to acidic residues; the sequence is DTEEPEEEEEGEE. 4 LRR repeats span residues 727-747, 755-778, 811-834, and 845-868; these read LCHL…VCRD, APAL…MLSE, SPAL…YLCA, and TLSL…KRAK.

This sequence belongs to the NLRP family. Homomultimer; forms the NLRP6 inflammasome polymeric complex, a filament composed of homopolymers in response to pathogens and other damage-associated signals. The core of NLRP6 inflammasomes consists of a signal sensor component (NLRP6), an adapter (PYCARD/ASC), which recruits effector pro-inflammatory caspases (CASP1 and CASP4). Interacts (via pyrin domain) with PYCARD/ASC (via pyrin domain); interaction takes place following NLRP6 activation and formation of liquid-liquid phase separation (LLPS), initiating nucleation which greatly enhances further addition of soluble PYCARD/ASC molecules to the speck in a prion-like polymerization process. Clustered PYCARD/ASC nucleates the formation of CASP1 (or possibly CASP4) filaments through the interaction of their respective CARD domains, acting as a platform for CASP1 polymerization. CASP1 filament formation increases local enzyme concentration, resulting in trans-autocleavage and activation. Active CASP1 then processes IL1B and IL18 precursors, leading to the release of mature cytokines in the extracellular milieu and inflammatory response. Interacts with DHX15. In terms of processing, polyubiquitinated with 'Lys-63'-linked chains, promoting the interaction with PYCARD/ASC and formation of the NLRP6 inflammasome. Deubiquitination by CYLD decreases the interaction with PYCARD/ASC. In terms of tissue distribution, expressed in peripheral blood leukocytes, predominantly in granulocytes and, at lower levels, in CD4(+) and CD8(+) T-cells. Expressed in colonic myofibroblasts (at protein level).

It is found in the cytoplasm. It localises to the cytosol. Its subcellular location is the inflammasome. The protein resides in the cell membrane. The protein localises to the nucleus membrane. Its function is as follows. Acts as the sensor component of the NLRP6 inflammasome, which mediates inflammasome activation in response to various pathogen-associated signals, leading to maturation and secretion of IL1B and IL18. Inflammasomes are supramolecular complexes that assemble in the cytosol in response to pathogens and other damage-associated signals and play critical roles in innate immunity and inflammation. Acts as a recognition receptor (PRR): recognizes and binds specific pathogens and other damage-associated signals, such as lipoteichoic acid (LTA), a cell-wall component of Gram-positive bacteria, or double stranded RNA (dsRNA). May also recognize and bind lipopolysaccharide (LPS), a major component of the outer membrane of Gram-negative bacteria; however, LPS is probably not a major activator of the NLRP6 inflammasome. Following LTA- or dsRNA-binding, NLRP6 undergoes liquid-liquid phase separation (LLPS), enhancing multivalent interactions, an essential step for the formation of the NLRP6 inflammasome polymeric complex. The NLRP6 inflammasome acts by promoting recruitment of effector pro-inflammatory caspases (CASP1 and/or CASP4) that catalyze maturation and secretion of IL1B and IL18 in the extracellular milieu. The NLRP6 inflammasome plays a central role in the maintenance of epithelial integrity and host defense against microbial infections in the intestine. Required to restrict infection against Gram-positive bacteria by recognizing lipoteichoic acid (LTA), leading to recruitment of CASP4 and CASP1, and subsequent maturation and secretion of IL1B and IL18. Involved in intestinal antiviral innate immunity together with DHX15: recognizes and binds viral dsRNA to restrict infection by enteric viruses through the interferon pathway and GSDMD-dependent release of IL18. Required to prevent infection by the apicomplexan parasite Cryptosporidium in enterocytes by promoting GSDMD-dependent release of IL18. The NLRP6 inflammasome may also regulate the gut microbiota composition by acting as a sensor of microbiota-associated metabolites to form a PYCARD/ASC-dependent inflammasome for downstream IL18 release and secretion of antimicrobial peptides. Essential for gut mucosal self-renewal and proliferation. Regulate mucus secretion in an inflammasome- and autophagy-dependent manner to prevent invasion by enteric bacteria,. During systemic bacterial infections, the NLRP6 inflammasome negatively regulates neutrophil recruitment and neutrophil extracellular traps (NETs) formation. May promote peripheral nerve recovery following injury via an inflammasome-independent mechanism. This chain is NACHT, LRR and PYD domains-containing protein 6, found in Homo sapiens (Human).